The chain runs to 292 residues: Expansin-like protein 6 (292 aa).

The signal sequence occupies residues 1-24 (MIKIIYLIVLLVLLFKNNHIIIKA). The Extracellular portion of the chain corresponds to 25 to 267 (DDCPFPQIPI…QITSNSNNIL (243 aa)). In terms of domain architecture, Expansin-like EG45 spans 47–150 (HASCGFEKLT…IKVPCPTYGN (104 aa)). Cystine bridges form between cysteine 50/cysteine 80 and cysteine 83/cysteine 145. Asparagine 92 is a glycosylation site (N-linked (GlcNAc...) asparagine). A helical transmembrane segment spans residues 268–288 (PPSLYIIFLISILFLIINNIF). The Cytoplasmic segment spans residues 289–292 (SNKY).

This sequence belongs to the expansin family. Expansin A subfamily.

Its subcellular location is the membrane. Functionally, may serve to lubricate the movement of the cellulose microfibrils during cell growth and wall extension and/or may serve to maintain the fluid state of the slug cell wall. This Dictyostelium discoideum (Social amoeba) protein is Expansin-like protein 6 (expl6).